The sequence spans 275 residues: Hydroxyethylthiazole kinase (275 aa).

Met57 is a substrate binding site. Positions 132 and 178 each coordinate ATP. Gly205 is a binding site for substrate.

Belongs to the Thz kinase family. It depends on Mg(2+) as a cofactor.

It carries out the reaction 5-(2-hydroxyethyl)-4-methylthiazole + ATP = 4-methyl-5-(2-phosphooxyethyl)-thiazole + ADP + H(+). It functions in the pathway cofactor biosynthesis; thiamine diphosphate biosynthesis; 4-methyl-5-(2-phosphoethyl)-thiazole from 5-(2-hydroxyethyl)-4-methylthiazole: step 1/1. In terms of biological role, catalyzes the phosphorylation of the hydroxyl group of 4-methyl-5-beta-hydroxyethylthiazole (THZ). The sequence is that of Hydroxyethylthiazole kinase from Clavibacter sepedonicus (Clavibacter michiganensis subsp. sepedonicus).